The chain runs to 258 residues: Probable parvulin-type peptidyl-prolyl cis-trans isomerase (258 aa).

The N-terminal stretch at 1–19 (MKRIAMLAAACVIAVPAFA) is a signal peptide. Residues 127–219 (KMEYKVRHIL…FGWHVIQVDD (93 aa)) enclose the PpiC domain.

Belongs to the PpiC/parvulin rotamase family.

The enzyme catalyses [protein]-peptidylproline (omega=180) = [protein]-peptidylproline (omega=0). In Bordetella parapertussis (strain 12822 / ATCC BAA-587 / NCTC 13253), this protein is Probable parvulin-type peptidyl-prolyl cis-trans isomerase.